The chain runs to 432 residues: Anaerobic glycerol-3-phosphate dehydrogenase subunit B (432 aa).

This sequence belongs to the anaerobic G-3-P dehydrogenase subunit B family. In terms of assembly, composed of a catalytic GlpA/B dimer and of membrane bound GlpC. The cofactor is FMN.

The enzyme catalyses a quinone + sn-glycerol 3-phosphate = dihydroxyacetone phosphate + a quinol. It functions in the pathway polyol metabolism; glycerol degradation via glycerol kinase pathway; glycerone phosphate from sn-glycerol 3-phosphate (anaerobic route): step 1/1. Functionally, conversion of glycerol 3-phosphate to dihydroxyacetone. Uses fumarate or nitrate as electron acceptor. The polypeptide is Anaerobic glycerol-3-phosphate dehydrogenase subunit B (Histophilus somni (strain 129Pt) (Haemophilus somnus)).